Consider the following 868-residue polypeptide: Ionotropic receptor 93a (868 aa).

An N-terminal signal peptide occupies residues 1–28 (MNPGEMRPSACLLLLAGLQLSILVPTEA). Residues 29–565 (NDFSSFLSAN…ITRKPDEVSR (537 aa)) are Extracellular-facing. 8 N-linked (GlcNAc...) asparagine glycosylation sites follow: Asn38, Asn205, Asn294, Asn305, Asn432, Asn475, Asn499, and Asn543. The helical transmembrane segment at 566 to 586 (IYLFTAPFTVETWFCLMGIIL) threads the bilayer. Residues 587-642 (LTAPTLYAINRLAPLKEMRIVGLSTVKSCFWYIFGALLQQGGMYLPTADSGRLVVG) are Cytoplasmic-facing. The helical transmembrane segment at 643-663 (FWWIVVIVLVTTYCGNLVAFL) threads the bilayer. Topologically, residues 664–832 (TFPKFQPGVD…HKVNMDDMQG (169 aa)) are extracellular. The N-linked (GlcNAc...) asparagine glycan is linked to Asn691. The chain crosses the membrane as a helical span at residues 833–853 (CFLVLLLGFTLALLIVCGEFW). Topologically, residues 854-868 (YRRFRASRKRRQFTN) are cytoplasmic.

This sequence belongs to the glutamate-gated ion channel (TC 1.A.10.1) family. In terms of tissue distribution, in the antenna, detected in sacculus neurons which innervate the first and second chambers (at protein level). Expressed in multiple cells of the larval dorsal organ ganglion, including the dorsal organ cool cells where it is predominately localized to the dendritic bulbs (at protein level).

It is found in the cell membrane. Its function is as follows. Integral part of various neural sensory systems in the antenna that provide the neural basis for the response to environmental changes in temperature (thermosensation) and humidity (hygrosensation). Together with Ir21a and Ir25a, mediates the response of the larval dorsal organ cool cells, a trio of cool-responsive neurons, to cooling and is required for cool avoidance behavior. Together with Ir25a and Ir40a, mediates the response of the hydrosensory sacculus neurons to changes in relative humidity, and is required for dry detection and humidiy preference behavior. The protein is Ionotropic receptor 93a of Drosophila melanogaster (Fruit fly).